Reading from the N-terminus, the 339-residue chain is 3-isopropylmalate dehydrogenase (339 aa).

Arg88, Arg98, Arg122, and Asp212 together coordinate substrate. Asp212, Asp236, and Asp240 together coordinate Mg(2+). 272–284 (GSAPDIAGKGIAD) provides a ligand contact to NAD(+).

This sequence belongs to the isocitrate and isopropylmalate dehydrogenases family. LeuB type 2 subfamily. Homodimer. It depends on Mg(2+) as a cofactor. Mn(2+) serves as cofactor.

It localises to the cytoplasm. It catalyses the reaction (2R,3S)-3-isopropylmalate + NAD(+) = 4-methyl-2-oxopentanoate + CO2 + NADH. The protein operates within amino-acid biosynthesis; L-leucine biosynthesis; L-leucine from 3-methyl-2-oxobutanoate: step 3/4. Catalyzes the oxidation of 3-carboxy-2-hydroxy-4-methylpentanoate (3-isopropylmalate) to 3-carboxy-4-methyl-2-oxopentanoate. The product decarboxylates to 4-methyl-2 oxopentanoate. This Corynebacterium aurimucosum (strain ATCC 700975 / DSM 44827 / CIP 107346 / CN-1) (Corynebacterium nigricans) protein is 3-isopropylmalate dehydrogenase.